The following is a 93-amino-acid chain: Acylphosphatase (93 aa).

Positions 7 to 93 (CLKAVISGKV…GEFRAFEILR (87 aa)) constitute an Acylphosphatase-like domain. Catalysis depends on residues R22 and N40.

Belongs to the acylphosphatase family.

The catalysed reaction is an acyl phosphate + H2O = a carboxylate + phosphate + H(+). This chain is Acylphosphatase (acyP), found in Acaryochloris marina (strain MBIC 11017).